Reading from the N-terminus, the 81-residue chain is Large ribosomal subunit protein bL31 (81 aa).

4 residues coordinate Zn(2+): Cys-16, Cys-18, Cys-38, and Cys-41.

This sequence belongs to the bacterial ribosomal protein bL31 family. Type A subfamily. In terms of assembly, part of the 50S ribosomal subunit. Zn(2+) is required as a cofactor.

Binds the 23S rRNA. The protein is Large ribosomal subunit protein bL31 of Mycobacterium sp. (strain JLS).